Here is a 390-residue protein sequence, read N- to C-terminus: Sorting nexin C1711.11 (390 aa).

The PX domain maps to Met1–Ser123. Residues Arg44, Lys70, and Arg89 each contribute to the a 1,2-diacyl-sn-glycero-3-phospho-(1D-myo-inositol-3-phosphate) site.

It belongs to the sorting nexin family.

The protein resides in the cytoplasm. The protein localises to the membrane. This is Sorting nexin C1711.11 from Schizosaccharomyces pombe (strain 972 / ATCC 24843) (Fission yeast).